The following is a 148-amino-acid chain: Iron/alpha-ketoglutarate-dependent dioxygenase ausU (148 aa).

The Fe cation site is built by H45 and D47.

This sequence belongs to the PhyH family. In terms of assembly, homodimer. Requires Fe cation as cofactor.

The protein operates within secondary metabolite biosynthesis; terpenoid biosynthesis. Functionally, iron/alpha-ketoglutarate-dependent dioxygenase; part of the gene cluster B that mediates the biosynthesis of austinol and dehydroaustinol, two fungal meroterpenoids. The first step of the pathway is the synthesis of 3,5-dimethylorsellinic acid by the polyketide synthase ausA. 3,5-dimethylorsellinic acid is then prenylated by the polyprenyl transferase ausN. Further epoxidation by the FAD-dependent monooxygenase ausM and cyclization by the probable terpene cyclase ausL lead to the formation of protoaustinoid A. Protoaustinoid A is then oxidized to spiro-lactone preaustinoid A3 by the combined action of the FAD-binding monooxygenases ausB and ausC, and the dioxygenase ausE. Acid-catalyzed keto-rearrangement and ring contraction of the tetraketide portion of preaustinoid A3 by ausJ lead to the formation of preaustinoid A4. The aldo-keto reductase ausK, with the help of ausH, is involved in the next step by transforming preaustinoid A4 into isoaustinone which is in turn hydroxylated by the P450 monooxygenase ausI to form austinolide. Finally, the cytochrome P450 monooxygenase ausG modifies austinolide to austinol. Austinol can be further modified to dehydroaustinol which forms a diffusible complex with diorcinol that initiates conidiation. Due to genetic rearrangements of the clusters and the subsequent loss of some enzymes, the end products of the Emericella nidulans austinoid biosynthesis clusters are austinol and dehydroaustinol, even if additional enzymes, such as the O-acetyltransferase ausQ and the cytochrome P450 monooxygenase ausR are still functional. This chain is Iron/alpha-ketoglutarate-dependent dioxygenase ausU, found in Emericella nidulans (strain FGSC A4 / ATCC 38163 / CBS 112.46 / NRRL 194 / M139) (Aspergillus nidulans).